We begin with the raw amino-acid sequence, 317 residues long: tRNA pseudouridine synthase B (317 aa).

Catalysis depends on Asp-47, which acts as the Nucleophile.

Belongs to the pseudouridine synthase TruB family. Type 1 subfamily.

It carries out the reaction uridine(55) in tRNA = pseudouridine(55) in tRNA. Responsible for synthesis of pseudouridine from uracil-55 in the psi GC loop of transfer RNAs. In Shewanella frigidimarina (strain NCIMB 400), this protein is tRNA pseudouridine synthase B.